We begin with the raw amino-acid sequence, 408 residues long: tRNA-specific 2-thiouridylase MnmA (408 aa).

Residues 27–34 and leucine 53 contribute to the ATP site; that span reads AMSGGVDS. The active-site Nucleophile is cysteine 121. Cysteines 121 and 222 form a disulfide. Glycine 145 contributes to the ATP binding site. An interaction with tRNA region spans residues 172–174; the sequence is RDQ. Cysteine 222 acts as the Cysteine persulfide intermediate in catalysis.

The protein belongs to the MnmA/TRMU family.

It localises to the cytoplasm. It carries out the reaction S-sulfanyl-L-cysteinyl-[protein] + uridine(34) in tRNA + AH2 + ATP = 2-thiouridine(34) in tRNA + L-cysteinyl-[protein] + A + AMP + diphosphate + H(+). Functionally, catalyzes the 2-thiolation of uridine at the wobble position (U34) of tRNA, leading to the formation of s(2)U34. In Rhizobium johnstonii (strain DSM 114642 / LMG 32736 / 3841) (Rhizobium leguminosarum bv. viciae), this protein is tRNA-specific 2-thiouridylase MnmA.